The following is a 377-amino-acid chain: DnaJ-related protein SCJ1 (377 aa).

Positions 1–21 are cleaved as a signal peptide; it reads MIPKLYIHLILSLLLLPLILA. Residues 23–88 enclose the J domain; it reads DYYAILEIDK…EKKKIYDQFG (66 aa). The segment at 156–237 adopts a CR-type zinc-finger fold; that stretch reads GSSIEFTLNL…CHGKKVTKKN (82 aa). CXXCXGXG motif repeat units follow at residues 169–176, 185–192, 211–218, and 225–232; these read CDACHGSG, CPDCQGRG, CGRCGGTG, and CKTCHGKK. Positions 288 to 290 match the Cell attachment site motif; the sequence is RGD. The Prevents secretion from ER signature appears at 374 to 377; that stretch reads KDEL.

It is found in the endoplasmic reticulum lumen. Regulates protein folding in the endoplasmic reticulum lumen. Probably acts as a J-protein for the Hsp70-type chaperone KAR2 by stimulating its ATP-dependent reaction cycle and initiating folding reactions. Also involved in the endoplasmic reticulum-associated degradation (ERAD) process. Cooperates with KAR2 and another J-protein JEM1 to facilitate the export of ERAD substrates to the cytoplasm by maintaining them in a translocation-competent state and preventing their aggregation in the endoplasmic reticulum lumen. This chain is DnaJ-related protein SCJ1 (SCJ1), found in Saccharomyces cerevisiae (strain ATCC 204508 / S288c) (Baker's yeast).